Consider the following 170-residue polypeptide: MDFKQHIAIVPDYPKEGIVFKDITPLMNDGKAYKAATDAIVEYAKERDIDVVVGPEARGFIIGCPVSYALEVGFAPVRKLGKLPREVITVDYGKEYGKDVLTIHKDAIKPGQRVLITDDLLATGGTIEATIKLVEELGGVVAGIAFLVELTYLDGRKMLDGYDVLVLEKY.

The protein belongs to the purine/pyrimidine phosphoribosyltransferase family. In terms of assembly, homodimer.

It is found in the cytoplasm. It carries out the reaction AMP + diphosphate = 5-phospho-alpha-D-ribose 1-diphosphate + adenine. It participates in purine metabolism; AMP biosynthesis via salvage pathway; AMP from adenine: step 1/1. Functionally, catalyzes a salvage reaction resulting in the formation of AMP, that is energically less costly than de novo synthesis. This is Adenine phosphoribosyltransferase from Bacillus cereus (strain G9842).